Reading from the N-terminus, the 255-residue chain is Ditrans,polycis-undecaprenyl-diphosphate synthase ((2E,6E)-farnesyl-diphosphate specific) (255 aa).

Residue aspartate 21 is part of the active site. Aspartate 21 contributes to the Mg(2+) binding site. Substrate is bound by residues 22 to 25 (GNGR), tryptophan 26, arginine 34, histidine 38, and 66 to 68 (SSE). Residue asparagine 69 is the Proton acceptor of the active site. Substrate-binding positions include tryptophan 70, arginine 72, arginine 189, and 195-197 (RIS). Glutamate 208 contributes to the Mg(2+) binding site.

It belongs to the UPP synthase family. As to quaternary structure, homodimer. The cofactor is Mg(2+).

The catalysed reaction is 8 isopentenyl diphosphate + (2E,6E)-farnesyl diphosphate = di-trans,octa-cis-undecaprenyl diphosphate + 8 diphosphate. Functionally, catalyzes the sequential condensation of isopentenyl diphosphate (IPP) with (2E,6E)-farnesyl diphosphate (E,E-FPP) to yield (2Z,6Z,10Z,14Z,18Z,22Z,26Z,30Z,34E,38E)-undecaprenyl diphosphate (di-trans,octa-cis-UPP). UPP is the precursor of glycosyl carrier lipid in the biosynthesis of bacterial cell wall polysaccharide components such as peptidoglycan and lipopolysaccharide. This is Ditrans,polycis-undecaprenyl-diphosphate synthase ((2E,6E)-farnesyl-diphosphate specific) from Xylella fastidiosa (strain 9a5c).